Here is a 995-residue protein sequence, read N- to C-terminus: Aconitate hydratase 2, mitochondrial (995 aa).

The N-terminal 83 residues, 1-83 (MYRRATSGVR…PASLRAQARN (83 aa)), are a transit peptide targeting the mitochondrion. Substrate is bound by residues Q187 and 306-308 (DSH). Positions 538, 604, and 607 each coordinate [4Fe-4S] cluster. Residues R637, R642, R800, and 881 to 882 (SR) each bind substrate.

The protein belongs to the aconitase/IPM isomerase family. In terms of assembly, monomer. Requires [4Fe-4S] cluster as cofactor. In terms of tissue distribution, mostly expressed in roots, leaves and flowers, also present in stems, and, at low levels, in seeds.

It is found in the mitochondrion. The enzyme catalyses citrate = D-threo-isocitrate. Its pathway is carbohydrate metabolism; tricarboxylic acid cycle; isocitrate from oxaloacetate: step 2/2. Its function is as follows. Catalyzes the isomerization of citrate to isocitrate via cis-aconitate. Contributes to oxidative stress tolerance. Involved in acetate assimilation. The polypeptide is Aconitate hydratase 2, mitochondrial (Arabidopsis thaliana (Mouse-ear cress)).